Consider the following 385-residue polypeptide: GDSL esterase/lipase At5g08460 (385 aa).

An N-terminal signal peptide occupies residues 1-35; sequence MHDSEIFKFKDMMMMSCTVQTLVLVPWFLVVFVLA. S56 functions as the Nucleophile in the catalytic mechanism. Residues N218 and N285 are each glycosylated (N-linked (GlcNAc...) asparagine). Active-site residues include D350 and H353. Residues N368 and N378 are each glycosylated (N-linked (GlcNAc...) asparagine).

Belongs to the 'GDSL' lipolytic enzyme family.

The protein localises to the secreted. In Arabidopsis thaliana (Mouse-ear cress), this protein is GDSL esterase/lipase At5g08460.